Consider the following 301-residue polypeptide: Mitochondrial import receptor subunit TOM40 homolog (301 aa).

Residues 1-20 form a disordered region; that stretch reads MATPTESEFAAPIPQTNPGS.

This sequence belongs to the Tom40 family. Forms part of the preprotein translocase complex of the outer mitochondrial membrane (TOM complex). Interacts with mitochondrial targeting sequences.

It localises to the mitochondrion outer membrane. In terms of biological role, channel-forming protein essential for import of protein precursors into mitochondria. Specifically required for nnt-1 accumulation in the mitochondria and may be involved in the secretion of daf-28/insulin from the mitochondria. Required for embryonic and larval development. This chain is Mitochondrial import receptor subunit TOM40 homolog, found in Caenorhabditis briggsae.